Consider the following 332-residue polypeptide: Glycerol-3-phosphate dehydrogenase [NAD(P)+] (332 aa).

NADPH contacts are provided by Trp13, Lys34, and Lys108. Positions 108, 136, and 138 each coordinate sn-glycerol 3-phosphate. Position 140 (Ala140) interacts with NADPH. 5 residues coordinate sn-glycerol 3-phosphate: Lys191, Asp244, Ser254, Arg255, and Asn256. Lys191 (proton acceptor) is an active-site residue. Arg255 contributes to the NADPH binding site. Val279 and Glu281 together coordinate NADPH.

Belongs to the NAD-dependent glycerol-3-phosphate dehydrogenase family.

It localises to the cytoplasm. It carries out the reaction sn-glycerol 3-phosphate + NAD(+) = dihydroxyacetone phosphate + NADH + H(+). It catalyses the reaction sn-glycerol 3-phosphate + NADP(+) = dihydroxyacetone phosphate + NADPH + H(+). It participates in membrane lipid metabolism; glycerophospholipid metabolism. Functionally, catalyzes the reduction of the glycolytic intermediate dihydroxyacetone phosphate (DHAP) to sn-glycerol 3-phosphate (G3P), the key precursor for phospholipid synthesis. The polypeptide is Glycerol-3-phosphate dehydrogenase [NAD(P)+] (Francisella tularensis subsp. holarctica (strain FTNF002-00 / FTA)).